Reading from the N-terminus, the 324-residue chain is NADH-quinone oxidoreductase subunit H (324 aa).

A run of 8 helical transmembrane segments spans residues 11–31 (ILIT…CGAF), 81–101 (VIFT…FAIV), 114–134 (IGIL…LFAG), 154–174 (VSYE…AGSF), 186–206 (LWNV…GVAV), 237–257 (FFVG…TLFF), 264–284 (ILPP…MFIL), and 304–324 (VCLP…LYNA).

The protein belongs to the complex I subunit 1 family. As to quaternary structure, NDH-1 is composed of 13 different subunits. Subunits NuoA, H, J, K, L, M, N constitute the membrane sector of the complex.

It localises to the cell inner membrane. It carries out the reaction a quinone + NADH + 5 H(+)(in) = a quinol + NAD(+) + 4 H(+)(out). Its function is as follows. NDH-1 shuttles electrons from NADH, via FMN and iron-sulfur (Fe-S) centers, to quinones in the respiratory chain. The immediate electron acceptor for the enzyme in this species is believed to be ubiquinone. Couples the redox reaction to proton translocation (for every two electrons transferred, four hydrogen ions are translocated across the cytoplasmic membrane), and thus conserves the redox energy in a proton gradient. This subunit may bind ubiquinone. This Pectobacterium carotovorum subsp. carotovorum (strain PC1) protein is NADH-quinone oxidoreductase subunit H.